The sequence spans 454 residues: Asparagine--tRNA ligase (454 aa).

Belongs to the class-II aminoacyl-tRNA synthetase family. Homodimer.

It is found in the cytoplasm. It catalyses the reaction tRNA(Asn) + L-asparagine + ATP = L-asparaginyl-tRNA(Asn) + AMP + diphosphate + H(+). In Ureaplasma urealyticum serovar 10 (strain ATCC 33699 / Western), this protein is Asparagine--tRNA ligase.